We begin with the raw amino-acid sequence, 67 residues long: Probable Sec-independent protein translocase protein TatE (67 aa).

The helical transmembrane segment at 1 to 21 (MEGISLAKLLIVGALIVLLFG) threads the bilayer. The disordered stretch occupies residues 43-67 (MNDDSDATSKTASEDKNAGQAVHKE). Residues 54-67 (ASEDKNAGQAVHKE) show a composition bias toward basic and acidic residues.

This sequence belongs to the TatA/E family. TatE subfamily.

Its subcellular location is the cell inner membrane. Functionally, part of the twin-arginine translocation (Tat) system that transports large folded proteins containing a characteristic twin-arginine motif in their signal peptide across membranes. TatE shares overlapping functions with TatA. This is Probable Sec-independent protein translocase protein TatE from Erwinia tasmaniensis (strain DSM 17950 / CFBP 7177 / CIP 109463 / NCPPB 4357 / Et1/99).